The following is a 590-amino-acid chain: Aspartate--tRNA(Asp/Asn) ligase (590 aa).

Residue glutamate 175 participates in L-aspartate binding. The interval 199-202 (QQYK) is aspartate. 2 residues coordinate L-aspartate: arginine 221 and histidine 450. 221 to 223 (RDE) provides a ligand contact to ATP. Glutamate 484 contributes to the ATP binding site. Residue arginine 491 participates in L-aspartate binding. An ATP-binding site is contributed by 536-539 (GVDR).

The protein belongs to the class-II aminoacyl-tRNA synthetase family. Type 1 subfamily. In terms of assembly, homodimer.

The protein resides in the cytoplasm. The catalysed reaction is tRNA(Asx) + L-aspartate + ATP = L-aspartyl-tRNA(Asx) + AMP + diphosphate. Its function is as follows. Aspartyl-tRNA synthetase with relaxed tRNA specificity since it is able to aspartylate not only its cognate tRNA(Asp) but also tRNA(Asn). Reaction proceeds in two steps: L-aspartate is first activated by ATP to form Asp-AMP and then transferred to the acceptor end of tRNA(Asp/Asn). The polypeptide is Aspartate--tRNA(Asp/Asn) ligase (Nitrobacter hamburgensis (strain DSM 10229 / NCIMB 13809 / X14)).